Reading from the N-terminus, the 268-residue chain is Tryptophan synthase alpha chain (268 aa).

Residues Glu49 and Asp60 each act as proton acceptor in the active site.

Belongs to the TrpA family. As to quaternary structure, tetramer of two alpha and two beta chains.

It carries out the reaction (1S,2R)-1-C-(indol-3-yl)glycerol 3-phosphate + L-serine = D-glyceraldehyde 3-phosphate + L-tryptophan + H2O. The protein operates within amino-acid biosynthesis; L-tryptophan biosynthesis; L-tryptophan from chorismate: step 5/5. Functionally, the alpha subunit is responsible for the aldol cleavage of indoleglycerol phosphate to indole and glyceraldehyde 3-phosphate. The chain is Tryptophan synthase alpha chain from Xanthomonas oryzae pv. oryzae (strain PXO99A).